The primary structure comprises 461 residues: Arginine biosynthesis bifunctional protein ArgJ, chloroplastic (461 aa).

Substrate contacts are provided by T202, K228, T239, E326, N456, and T461. Residue T239 is the Nucleophile of the active site.

This sequence belongs to the ArgJ family. In terms of assembly, heterodimer of an alpha and a beta chain.

The protein localises to the plastid. The protein resides in the chloroplast. It catalyses the reaction N(2)-acetyl-L-ornithine + L-glutamate = N-acetyl-L-glutamate + L-ornithine. The catalysed reaction is L-glutamate + acetyl-CoA = N-acetyl-L-glutamate + CoA + H(+). The protein operates within amino-acid biosynthesis; L-arginine biosynthesis; L-ornithine and N-acetyl-L-glutamate from L-glutamate and N(2)-acetyl-L-ornithine (cyclic): step 1/1. It functions in the pathway amino-acid biosynthesis; L-arginine biosynthesis; N(2)-acetyl-L-ornithine from L-glutamate: step 1/4. In terms of biological role, catalyzes two activities which are involved in the cyclic version of arginine biosynthesis: the synthesis of acetylglutamate from glutamate and acetyl-CoA, and of ornithine by transacetylation between acetylornithine and glutamate. This chain is Arginine biosynthesis bifunctional protein ArgJ, chloroplastic, found in Ostreococcus lucimarinus (strain CCE9901).